The primary structure comprises 7481 residues: Polyketide synthase GfsA (7481 aa).

The loading module (LM) stretch occupies residues 24–1020; the sequence is ASDEPIAVIG…ETAEFVRARL (997 aa). The 426-residue stretch at 26 to 451 folds into the Ketosynthase family 3 (KS3) 1 domain; the sequence is DEPIAVIGLS…GTNCHVVVSA (426 aa). The interval 60-80 is disordered; the sequence is RVPADRETPPSTEEESADGEA. Gln-197 functions as the For decarboxylation activity of LM in the catalytic mechanism. Catalysis depends on Ser-662, which acts as the For acyltransferase activity of LM. Residues 945–1020 enclose the Carrier 1 domain; the sequence is PDPVETVRQL…ETAEFVRARL (76 aa). Ser-980 bears the O-(pantetheine 4'-phosphoryl)serine mark. One can recognise a Ketosynthase family 3 (KS3) 2 domain in the interval 1038–1454; sequence DEPIAVVAMS…GTNAHVILEQ (417 aa). 4 module regions span residues 1038–2517, 2538–4063, 4084–5636, and 5655–7400; these read DEPI…AGEL, EDPI…LQRI, DDPI…GSEV, and DEPV…GEQL. Catalysis depends on for beta-ketoacyl synthase 1 activity residues Cys-1201, His-1336, and His-1376. The 76-residue stretch at 2442–2517 folds into the Carrier 2 domain; the sequence is RVLLDLVRGR…ALAEHLAGEL (76 aa). Ser-2477 bears the O-(pantetheine 4'-phosphoryl)serine mark. In terms of domain architecture, Ketosynthase family 3 (KS3) 3 spans 2538–2964; it reads EDPIAIVAMS…GTNAHVIIEE (427 aa). Active-site for beta-ketoacyl synthase 2 activity residues include Cys-2711, His-2846, and His-2886. The region spanning 3988 to 4063 is the Carrier 3 domain; sequence QALQDLVLTE…ATTEYLLQRI (76 aa). Ser-4023 bears the O-(pantetheine 4'-phosphoryl)serine mark. The 431-residue stretch at 4084-4514 folds into the Ketosynthase family 3 (KS3) 4 domain; that stretch reads DDPIAIVAMG…GTNAHVILEQ (431 aa). Catalysis depends on for beta-ketoacyl synthase 3 activity residues Cys-4261, His-4396, and His-4436. Positions 5561 to 5636 constitute a Carrier 4 domain; sequence TALLDLIRGQ…ALAEYVGSEV (76 aa). Ser-5596 is subject to O-(pantetheine 4'-phosphoryl)serine. The region spanning 5655-6081 is the Ketosynthase family 3 (KS3) 5 domain; it reads DEPVAIIGMS…GTNAHVILEQ (427 aa). Catalysis depends on for beta-ketoacyl synthase 4 activity residues Cys-5828, His-5963, and His-6003. The tract at residues 6561–6685 is N-terminal hotdog fold; sequence HPLLGAAVAL…GVLASGAATV (125 aa). Residues 6561–6841 form the PKS/mFAS DH domain; the sequence is HPLLGAAVAL…LRPVSADTIA (281 aa). Catalysis depends on His-6593, which acts as the Proton acceptor; for dehydratase activity. Positions 6700 to 6841 are C-terminal hotdog fold; the sequence is ATAVDIDGLY…LRPVSADTIA (142 aa). Asp-6761 (proton donor; for dehydratase activity) is an active-site residue. In terms of domain architecture, Carrier 5 spans 7325–7400; it reads QELLDFVCEH…LLAGHIGEQL (76 aa). At Ser-7360 the chain carries O-(pantetheine 4'-phosphoryl)serine.

Homodimer. The loading module (LM, residues 13-926) dimerizes. LM cross-links to its cognate acyl-carrier domain in a manner that seems physiological; mutation of residues in the 2 domains alters reactions efficiency in a manner predicted by the cross-linked crystal. Pantetheine 4'-phosphate serves as cofactor.

It functions in the pathway antibiotic biosynthesis. Functionally, first protein in the synthesis of the 16-membered macrolide antibiotics FD-891 and FD-892. Composed of 5 modules; the first is a loading module (LM) that synthesizes a starter unit used by the first elongation module for polyketide chain elongation. The starter unit is extended by multiple rounds of addition of malonyl-CoA or methylmalonyl-CoA, and other modifications to help generate the final products. The loading module (residues 1-927, LM with an inactive acyltransferase domain) preferentially decarboxylates malonyl-GfsA acyl carrier protein of the LM (ACP-LM) over methylmalonyl-GfsA ACP-LM and has no activity on malonyl-CoA or methymalonyl-CoA. LM decarboxylates malonyl-ACP-LM better than the malonyl-ACP-1 module of GfsA (i.e. the next module in the same protein) and has no activity on other malonyl-ACP modules. The chain is Polyketide synthase GfsA from Streptomyces halstedii.